The chain runs to 309 residues: Methionyl-tRNA formyltransferase (309 aa).

112–115 (SLLP) provides a ligand contact to (6S)-5,6,7,8-tetrahydrofolate.

The protein belongs to the Fmt family.

It carries out the reaction L-methionyl-tRNA(fMet) + (6R)-10-formyltetrahydrofolate = N-formyl-L-methionyl-tRNA(fMet) + (6S)-5,6,7,8-tetrahydrofolate + H(+). Attaches a formyl group to the free amino group of methionyl-tRNA(fMet). The formyl group appears to play a dual role in the initiator identity of N-formylmethionyl-tRNA by promoting its recognition by IF2 and preventing the misappropriation of this tRNA by the elongation apparatus. This Bartonella tribocorum (strain CIP 105476 / IBS 506) protein is Methionyl-tRNA formyltransferase.